The following is a 91-amino-acid chain: Molybdopterin synthase sulfur carrier subunit (91 aa).

Glycine 91 is subject to 1-thioglycine; alternate. Glycyl adenylate; alternate is present on glycine 91.

It belongs to the MoaD family. MOCS2A subfamily. In terms of assembly, heterotetramer; composed of 2 small (MOCS2A) and 2 large (MOCS2B) subunits. In terms of processing, C-terminal thiocarboxylation occurs in 2 steps, it is first acyl-adenylated (-COAMP) via the hesA/moeB/thiF part of MOCS3, then thiocarboxylated (-COSH) via the rhodanese domain of MOCS3.

Its subcellular location is the cytoplasm. It functions in the pathway cofactor biosynthesis; molybdopterin biosynthesis. Acts as a sulfur carrier required for molybdopterin biosynthesis. Component of the molybdopterin synthase complex that catalyzes the conversion of precursor Z into molybdopterin by mediating the incorporation of 2 sulfur atoms into precursor Z to generate a dithiolene group. In the complex, serves as sulfur donor by being thiocarboxylated (-COSH) at its C-terminus by MOCS3. After interaction with MOCS2B, the sulfur is then transferred to precursor Z to form molybdopterin. The polypeptide is Molybdopterin synthase sulfur carrier subunit (Anopheles gambiae (African malaria mosquito)).